Reading from the N-terminus, the 1146-residue chain is Inositol hexakisphosphate and diphosphoinositol-pentakisphosphate kinase (1146 aa).

Positions 1–33 (MSGIKKEPIESDEVPQQETKNNLPSAPSEMSPL) are disordered. A compositionally biased stretch (polar residues) spans 16-25 (QQETKNNLPS). A phosphoserine mark is found at S31, S54, and S77. A disordered region spans residues 93-185 (TALGNGNNTN…STSHPKPRLP (93 aa)). Low complexity predominate over residues 96–106 (GNGNNTNTVTT). Positions 110–120 (KKADSESKSEA) are enriched in basic and acidic residues. Residues 125–144 (LSNSNIVNDADNINSISKTG) are compositionally biased toward polar residues. Low complexity predominate over residues 164–178 (SVPTSSASSRKSSTS). 197 to 198 (AK) provides a ligand contact to substrate. Residues R278, K351, H358, R377, 402-405 (EQFM), and 412-414 (DVK) each bind ATP. Residue 377–378 (RK) participates in substrate binding. Substrate is bound by residues K414 and R428. ATP is bound by residues S430, D475, and 487-489 (DVN). A substrate-binding site is contributed by 492-495 (SFVK). The polyphosphoinositide-binding domain stretch occupies residues 530–597 (REEKEQKWVF…VLQALRIALD (68 aa)). A phosphoserine mark is found at S895 and S1107. Residues 1106-1146 (TSPNLSFQKRKTRRKSVSVEKLKRPASSGSSSSTSVNKTLD) form a disordered region.

This sequence belongs to the histidine acid phosphatase family. VIP1 subfamily.

It localises to the cytoplasm. It is found in the cytoskeleton. It catalyses the reaction 1D-myo-inositol hexakisphosphate + ATP = 1-diphospho-1D-myo-inositol 2,3,4,5,6-pentakisphosphate + ADP. The catalysed reaction is 5-diphospho-1D-myo-inositol 1,2,3,4,6-pentakisphosphate + ATP + H(+) = 1,5-bis(diphospho)-1D-myo-inositol 2,3,4,6-tetrakisphosphate + ADP. Functionally, bifunctional inositol kinase that acts in concert with the IP6K kinases to synthesize the diphosphate group-containing inositol pyrophosphates diphosphoinositol pentakisphosphate, PP-InsP5, and bis-diphosphoinositol tetrakisphosphate, (PP)2-InsP4. Phosphorylates inositol hexakisphosphate (InsP6) at position 1 to produce PP-InsP5 which is in turn phosphorylated by IP6Ks to produce (PP)2-InsP4. Alternatively, phosphorylates PP-InsP5 at position 1, produced by IP6Ks from InsP6, to produce (PP)2-InsP4. Required for maintaining cellular integrity, normal growth and interactions with the ARP complex. Acts as a regulator of the PHO80-PHO85 cyclin/cyclin-dependent kinase (CDK) complex, thereby regulating signaling of phosphate availability. Required for the function of the cortical actin cytoskeleton, possibly by participating in correct F-actin localization and ensuring polarized growth. Regulates polarized growth and modulates interphase microtubule cytoskeleton. Regulates microtubule dynamics without the requirement of microtubule plus-end tracking protein Mal3. Required for growth zone selection. In Saccharomyces cerevisiae (strain ATCC 204508 / S288c) (Baker's yeast), this protein is Inositol hexakisphosphate and diphosphoinositol-pentakisphosphate kinase.